The primary structure comprises 749 residues: MSFIDPYQHIIVEHQYSHKFTVVVLRATKVTKGAFGDMLDTPDPYVELFISTTPDSRKRTRHFNNDINPVWNETFEFILDPNQENVLEITLMDANYVMDETLGTATFTVSSMKVGEKKEVPFIFNQVTEMVLEMSLEVCSCPDLRFSMALCDQEKTFRQQRKEHIRESMKKLLGPKNSEGLHSARDVPVVAILGSGGGFRAMVGFSGVMKALYESGILDCATYVAGLSGSTWYMSTLYSHPDFPEKGPEEINEELMKNVSHNPLLLLTPQKVKRYVESLWKKKSSGQPVTFTDIFGMLIGETLIHNRMNTTLSSLKEKVNTAQCPLPLFTCLHVKPDVSELMFADWVEFSPYEIGMAKYGTFMAPDLFGSKFFMGTVVKKYEENPLHFLMGVWGSAFSILFNRVLGVSGSQSRGSTMEEELENITTKHIVSNDSSDSDDESHEPKGTENEDAGSDYQSDNQASWIHRMIMALVSDSALFNTREGRAGKVHNFMLGLNLNTSYPLSPLSDFATQDSFDDDELDAAVADPDEFERIYEPLDVKSKKIHVVDSGLTFNLPYPLILRPQRGVDLIISFDFSARPSDSSPPFKELLLAEKWAKMNKLPFPKIDPYVFDREGLKECYVFKPKNPDMEKDCPTIIHFVLANINFRKYRAPGVPRETEEEKEIADFDIFDDPESPFSTFNFQYPNQAFKRLHDLMHFNTLNNIDVIKEAMVESIEYRRQNPSRCSVSLSNVEARRFFNKEFLSKPKA.

Positions 1–178 (MSFIDPYQHI…MKKLLGPKNS (178 aa)) are phospholipid binding. Residue serine 2 is modified to Phosphoserine. Positions 6–122 (PYQHIIVEHQ…KVGEKKEVPF (117 aa)) constitute a C2 domain. The Ca(2+) site is built by aspartate 40, threonine 41, aspartate 43, asparagine 65, aspartate 93, alanine 94, and asparagine 95. In terms of domain architecture, PLA2c spans 140–740 (SCPDLRFSMA…SNVEARRFFN (601 aa)). Serine 228 functions as the Nucleophile in the catalytic mechanism. Threonine 268 carries the post-translational modification Phosphothreonine. Residues 409–457 (GSQSRGSTMEEELENITTKHIVSNDSSDSDDESHEPKGTENEDAGSDYQ) are disordered. 3 positions are modified to phosphoserine: serine 434, serine 435, and serine 437. Serine 505 carries the phosphoserine; by MAPK modification. The residue at position 515 (serine 515) is a Phosphoserine. Lysine 541 is covalently cross-linked (Glycyl lysine isopeptide (Lys-Gly) (interchain with G-Cter in SUMO2)). The Proton acceptor role is filled by aspartate 549. A Glycyl lysine isopeptide (Lys-Gly) (interchain with G-Cter in SUMO2) cross-link involves residue lysine 606. 2 positions are modified to phosphoserine: serine 727 and serine 729.

As to quaternary structure, interacts with KAT5. Post-translationally, phosphorylated at both Ser-505 and Ser-727 in response to mitogenic stimuli. In terms of tissue distribution, expressed in various cells and tissues such as macrophages, neutrophils, fibroblasts and lung endothelium. Expressed in platelets (at protein level).

It is found in the cytoplasm. The protein resides in the golgi apparatus membrane. Its subcellular location is the nucleus envelope. It carries out the reaction a 1,2-diacyl-sn-glycero-3-phosphocholine + H2O = a 1-acyl-sn-glycero-3-phosphocholine + a fatty acid + H(+). The enzyme catalyses a 1-O-alkyl-2-acyl-sn-glycero-3-phosphocholine + H2O = a 1-O-alkyl-sn-glycero-3-phosphocholine + a fatty acid + H(+). The catalysed reaction is a 1-acyl-sn-glycero-3-phosphocholine + H2O = sn-glycerol 3-phosphocholine + a fatty acid + H(+). It catalyses the reaction 1-hexadecanoyl-2-(5Z,8Z,11Z,14Z-eicosatetraenoyl)-sn-glycero-3-phosphocholine + H2O = 1-hexadecanoyl-sn-glycero-3-phosphocholine + (5Z,8Z,11Z,14Z)-eicosatetraenoate + H(+). It carries out the reaction 1,2-di-(5Z,8Z,11Z,14Z-eicosatetraenoyl)-sn-glycero-3-phosphocholine + H2O = 1-(5Z,8Z,11Z,14Z-eicosatetraenoyl)-sn-glycero-3-phosphocholine + (5Z,8Z,11Z,14Z)-eicosatetraenoate + H(+). The enzyme catalyses 1-octadecanoyl-2-(5Z,8Z,11Z,14Z-eicosatetraenoyl)-sn-glycero-3-phosphocholine + H2O = 1-octadecanoyl-sn-glycero-3-phosphocholine + (5Z,8Z,11Z,14Z)-eicosatetraenoate + H(+). The catalysed reaction is 1-hexadecanoyl-2-(9Z,12Z-octadecadienoyl)-sn-glycero-3-phosphocholine + H2O = (9Z,12Z)-octadecadienoate + 1-hexadecanoyl-sn-glycero-3-phosphocholine + H(+). It catalyses the reaction 1-octadecanoyl-2-(9Z,12Z,15Z-octadecatrienoyl)-sn-glycero-3-phosphocholine + H2O = (9Z,12Z,15Z)-octadecatrienoate + 1-octadecanoyl-sn-glycero-3-phosphocholine + H(+). It carries out the reaction 1-(5Z,8Z,11Z,14Z-eicosatetraenoyl)-2-hexadecanoyl-sn-glycero-3-phosphocholine + H2O = 1-(5Z,8Z,11Z,14Z-eicosatetraenoyl)-sn-glycero-3-phosphocholine + hexadecanoate + H(+). The enzyme catalyses 1-O-hexadecyl-2-(5Z,8Z,11Z,14Z)-eicosatetraenoyl-sn-glycero-3-phosphocholine + H2O = 1-O-hexadecyl-sn-glycero-3-phosphocholine + (5Z,8Z,11Z,14Z)-eicosatetraenoate + H(+). The catalysed reaction is 1,2-di-(9Z-octadecenoyl)-sn-glycero-3-phospho-(1'-sn-glycerol) + H2O = 1-(9Z-octadecenoyl)-sn-glycero-3-phospho-(1'-sn-glycerol) + (9Z)-octadecenoate + H(+). It catalyses the reaction 1-octadecanoyl-2-(5Z,8Z,11Z,14Z-eicosatetraenoyl)-sn-glycero-3-phosphate + H2O = 1-octadecanoyl-sn-glycero-3-phosphate + (5Z,8Z,11Z,14Z)-eicosatetraenoate + H(+). It carries out the reaction 1-hexadecanoyl-sn-glycero-3-phosphocholine + H2O = sn-glycerol 3-phosphocholine + hexadecanoate + H(+). The enzyme catalyses 2-(prostaglandin E2)-sn-glycero-3-phosphoethanolamine + H2O = sn-glycero-3-phosphoethanolamine + prostaglandin E2 + H(+). The catalysed reaction is 2-[(15S)-hydroxy-(5Z,8Z,11Z,13E)-eicosatetraenoyl]-sn-glycero-3-phosphocholine + H2O = (15S)-hydroxy-(5Z,8Z,11Z,13E)-eicosatetraenoate + sn-glycerol 3-phosphocholine + H(+). It catalyses the reaction 2-[(15R)-hydroxy-(5Z,8Z,11Z,13E)-eicosatetraenoyl]-sn-glycero-3-phosphocholine + H2O = (15R)-hydroxy-(5Z,8Z,11Z,13E)-eicosatetraenoate + sn-glycerol 3-phosphocholine + H(+). It carries out the reaction 2-(prostaglandin E2)-sn-glycero-3-phosphocholine + H2O = prostaglandin E2 + sn-glycerol 3-phosphocholine + H(+). The enzyme catalyses 2-[(11R)-hydroxy-(5Z,8Z,12E,14Z)-eicosatetraenoyl]-sn-glycero-3-phosphocholine + H2O = (11R)-hydroxy-(5Z,8Z,12E,14Z)-eicosatetraenoate + sn-glycerol 3-phosphocholine + H(+). The catalysed reaction is 1-(5Z,8Z,11Z,14Z-eicosatetraenoyl)-2-O-hexadecyl-sn-glycero-3-phosphocholine + H2O = 2-O-hexadecyl-sn-glycero-3-phosphocholine + (5Z,8Z,11Z,14Z)-eicosatetraenoate + H(+). It catalyses the reaction 1-octadecanoyl-2-(5Z,8Z,11Z,14Z-eicosatetraenoyl)-sn-glycero-3-phosphocholine + glycerol = 1-(5Z,8Z,11Z,14Z-eicosatetraenoyl)-glycerol + 1-octadecanoyl-sn-glycero-3-phosphocholine. It carries out the reaction 1-octadecanoyl-2-(9Z,12Z,15Z-octadecatrienoyl)-sn-glycero-3-phosphocholine + glycerol = 1-(9Z,12Z,15Z-octadecatrienoyl)-glycerol + 1-octadecanoyl-sn-glycero-3-phosphocholine. The protein operates within membrane lipid metabolism; glycerophospholipid metabolism. It functions in the pathway lipid metabolism; arachidonate metabolism. Its pathway is lipid metabolism; prostaglandin biosynthesis. It participates in lipid metabolism; leukotriene B4 biosynthesis. Activated by cytosolic calcium, which is necessary for binding to membrane lipids. Activated by phosphorylation in response to mitogenic stimuli. Activated by ceramide-1-phosphate. Binding (via C2 domain) to ceramide-1-phosphate increases the affinity for membrane lipids. Can be activated by phosphoinositides in the absence of calcium. Inhibited by ANXA5 in a calcium- and substrate-dependent way. Its function is as follows. Has primarily calcium-dependent phospholipase and lysophospholipase activities, with a major role in membrane lipid remodeling and biosynthesis of lipid mediators of the inflammatory response. Plays an important role in embryo implantation and parturition through its ability to trigger prostanoid production. Preferentially hydrolyzes the ester bond of the fatty acyl group attached at sn-2 position of phospholipids (phospholipase A2 activity). Selectively hydrolyzes sn-2 arachidonoyl group from membrane phospholipids, providing the precursor for eicosanoid biosynthesis via the cyclooxygenase pathway. In an alternative pathway of eicosanoid biosynthesis, hydrolyzes sn-2 fatty acyl chain of eicosanoid lysophopholipids to release free bioactive eicosanoids. Hydrolyzes the ester bond of the fatty acyl group attached at sn-1 position of phospholipids (phospholipase A1 activity) only if an ether linkage rather than an ester linkage is present at the sn-2 position. This hydrolysis is not stereospecific. Has calcium-independent phospholipase A2 and lysophospholipase activities in the presence of phosphoinositides. Has O-acyltransferase activity. Catalyzes the transfer of fatty acyl chains from phospholipids to a primary hydroxyl group of glycerol (sn-1 or sn-3), potentially contributing to monoacylglycerol synthesis. This chain is Cytosolic phospholipase A2 (PLA2G4A), found in Homo sapiens (Human).